The following is an 842-amino-acid chain: ATP-binding cassette sub-family B member 6 (842 aa).

Residues 1 to 26 (MVTVGNYCEAEGPLGPAWAQNGLSPC) lie on the Lumenal side of the membrane. The tract at residues 1-205 (MVTVGNYCEA…SGGLFILGLW (205 aa)) is required for the lysosomal targeting. Residues 1–236 (MVTVGNYCEA…RNQAQSTDRT (236 aa)) are required for ATPase activity. A disulfide bridge connects residues Cys-8 and Cys-26. The helical transmembrane segment at 27–47 (FFFTLVPSTLMALGALALVLV) threads the bilayer. Residues 48–72 (LPCRRRDVPSGTEELFWAADSRVAP) are Cytoplasmic-facing. The chain crosses the membrane as a helical span at residues 73–93 (YALQLFLATLQVALPLAGLAG). Residues 94-106 (RVGTARGVRLPGY) lie on the Lumenal side of the membrane. The helical transmembrane segment at 107 to 127 (LLLASMLGSLASACGLWLLVA) threads the bilayer. The Cytoplasmic portion of the chain corresponds to 128–147 (ERRQARQSLAMGVWMKFRHS). The helical transmembrane segment at 148–168 (SGLLLLWTVAFAAENLALVSW) threads the bilayer. Residues 169-185 (NSPQWWWARADLGQQVQ) are Lumenal-facing. A helical membrane pass occupies residues 186–206 (FGLWVLRYVISGGLFILGLWA). At 207-263 (PGLRPQSYTLRVHEADQDVERNQAQSTDRTSTWRDLGRKLRLLSSYLWPRGSPALQF) the chain is on the cytoplasmic side. Residues 264-284 (IVLICLGLMGLDRALNVLVPI) traverse the membrane as a helical segment. Residues 265–556 (VLICLGLMGL…FGTYYRMIQT (292 aa)) form the ABC transmembrane type-1 domain. The Lumenal segment spans residues 285-305 (FYRDIVNLLTSKAPWSSLAWT). Residues 306–326 (VTTYVFLKFLQGGGTGSTGFV) traverse the membrane as a helical segment. Residues 327–375 (SNLRTFLWIRVQQFTSRGVELRLFSHLHELSLRWHLGRRTGEVLRVVDR) are Cytoplasmic-facing. The helical transmembrane segment at 376–396 (GTSSVTGLLSYLVFNIIPTLA) threads the bilayer. Position 397 (Asp-397) is a topological domain, lumenal. A helical transmembrane segment spans residues 398 to 418 (IIIGIIYFSMFFNAWFGLIVF). Residues 419 to 499 (LCMSLYLFLT…SSASLVVLNQ (81 aa)) lie on the Cytoplasmic side of the membrane. Residues 500–520 (TQNLVIGLGLLAGSLLCAYFV) form a helical membrane-spanning segment. Topologically, residues 521–529 (SEQKLQVGD) are lumenal. Residues 530-550 (FVLFGTYITQLYMPLNWFGTY) traverse the membrane as a helical segment. Over 551–842 (YRMIQTNFID…SEDSKPQDIA (292 aa)) the chain is Cytoplasmic. Positions 590–824 (IEFENVHFSY…GGVYAEMWQL (235 aa)) constitute an ABC transporter domain. 623–630 (GPSGAGKS) lines the ATP pocket.

The protein belongs to the ABC transporter superfamily. ABCB family. Heavy Metal importer (TC 3.A.1.210) subfamily. Homodimer. In terms of processing, N-glycosylated. In terms of tissue distribution, highly expressed in the liver, adrenal glands, and testis.

It is found in the cell membrane. The protein localises to the mitochondrion outer membrane. The protein resides in the endoplasmic reticulum membrane. It localises to the golgi apparatus membrane. Its subcellular location is the endosome membrane. It is found in the lysosome membrane. The protein localises to the late endosome membrane. The protein resides in the early endosome membrane. It localises to the secreted. Its subcellular location is the extracellular exosome. It is found in the mitochondrion. The protein localises to the endosome. The protein resides in the multivesicular body membrane. It localises to the melanosome membrane. The catalysed reaction is heme b(in) + ATP + H2O = heme b(out) + ADP + phosphate + H(+). It catalyses the reaction coproporphyrin III(in) + ATP + H2O = coproporphyrin III(out) + ADP + phosphate + H(+). It carries out the reaction pheophorbide a(in) + ATP + H2O = pheophorbide a(out) + ADP + phosphate + H(+). The enzyme catalyses coproporphyrinogen III(in) + ATP + H2O = coproporphyrinogen III(out) + ADP + phosphate + H(+). The catalysed reaction is protoporphyrin IX(in) + ATP + H2O = protoporphyrin IX(out) + ADP + phosphate + H(+). It catalyses the reaction coproporphyrin I(in) + ATP + H2O = coproporphyrin I(out) + ADP + phosphate + H(+). It carries out the reaction uroporphyrin I(in) + ATP + H2O = uroporphyrin I(out) + ADP + phosphate + H(+). The enzyme catalyses uroporphyrin III(in) + ATP + H2O = uroporphyrin III(out) + ADP + phosphate + H(+). Its function is as follows. ATP-dependent transporter that catalyzes the transport of a broad-spectrum of porphyrins from the cytoplasm to the extracellular space through the plasma membrane or into the vesicle lumen. May also function as an ATP-dependent importer of porphyrins from the cytoplasm into the mitochondria, in turn may participate in the de novo heme biosynthesis regulation and in the coordination of heme and iron homeostasis during phenylhydrazine stress. May also play a key role in the early steps of melanogenesis producing PMEL amyloid fibrils. In vitro, it confers to cells a resistance to toxic metal such as arsenic and cadmium and against chemotherapeutics agent such as 5-fluorouracil, SN-38 and vincristin. In addition may play a role in the transition metal homeostasis. The chain is ATP-binding cassette sub-family B member 6 from Mesocricetus auratus (Golden hamster).